The chain runs to 535 residues: MHDKILILDFGSQVTQLIARRVRDARVYSEIHPYDCDPEFIRKFIQEQGGKGIILSGGPNSVTEDGSPRAPQIVFELGVPVLGICYGMQTMATQLGGAVASAESLGKAREFGYSEVRAHGHTNLLKGIQDFSTSEGHGILKVWMSHGDSVTALPPAFKLMASTESCPIAGMADEDRRFYAFQFHPEVTHTIQGTAIIERFVHEICHCKPDWVMGDYIAEAVEHIRKQVGDEEVILGLSGGVDSSVAAALIHRAIGDQLTCVFVDHGLLRLNEGDMVMEMFARNLGVKVIRVDAASTFMGKLTGVADPEAKRKIIGKEFVEIFQSESGKIENAKWLAQGTIYPDVIESAGKGKKGAHTIKSHHNVGGLPEDMHLKLLEPLRELFKDEVRELGVALGLPREMVYRHPFPGPGLGVRILGEVKAEFASLLQRADAIFIEELRNTIDEVSQKSWYDLTSQAFAVFLPVKSVGVMGDGRTYEYVVALRAVQTQDFMTAHWAHLPHELLGKVSNRIINEVRGINRVVYDISGKPPATIEWE.

Residues 4-210 (KILILDFGSQ…VHEICHCKPD (207 aa)) enclose the Glutamine amidotransferase type-1 domain. Cysteine 85 functions as the Nucleophile in the catalytic mechanism. Active-site residues include histidine 184 and glutamate 186. Positions 211 to 403 (WVMGDYIAEA…LGLPREMVYR (193 aa)) constitute a GMPS ATP-PPase domain. 238–244 (SGGVDSS) is a binding site for ATP.

Homodimer.

The catalysed reaction is XMP + L-glutamine + ATP + H2O = GMP + L-glutamate + AMP + diphosphate + 2 H(+). Its pathway is purine metabolism; GMP biosynthesis; GMP from XMP (L-Gln route): step 1/1. Catalyzes the synthesis of GMP from XMP. The protein is GMP synthase [glutamine-hydrolyzing] of Polynucleobacter asymbioticus (strain DSM 18221 / CIP 109841 / QLW-P1DMWA-1) (Polynucleobacter necessarius subsp. asymbioticus).